The primary structure comprises 64 residues: Anti-sigma-G factor Gin (64 aa).

Zn(2+) contacts are provided by Cys11, Cys14, Cys30, and Cys33.

In terms of assembly, probably functions as a homodimer. Interacts with sigma-G factor, recognition occurs via the first 71 residues of sigma-G. It depends on Zn(2+) as a cofactor.

Functionally, an anti-sigma-G factor, prevents premature activation of sigma-G factor in the forespore; overexpression leads to 1000-fold reduction in spore formation, spore formation stops after engulfment. Overexpression also inhibits sigma-G transcription activation activity. When both Gin and sigma-G are expressed in E.coli Gin inhibits sigma-G, strongly suggesting Gin inhibits by direct physical interaction. In Bacillus subtilis (strain 168), this protein is Anti-sigma-G factor Gin.